Here is a 121-residue protein sequence, read N- to C-terminus: Ribonuclease P protein component (121 aa).

Belongs to the RnpA family. Consists of a catalytic RNA component (M1 or rnpB) and a protein subunit.

It carries out the reaction Endonucleolytic cleavage of RNA, removing 5'-extranucleotides from tRNA precursor.. Its function is as follows. RNaseP catalyzes the removal of the 5'-leader sequence from pre-tRNA to produce the mature 5'-terminus. It can also cleave other RNA substrates such as 4.5S RNA. The protein component plays an auxiliary but essential role in vivo by binding to the 5'-leader sequence and broadening the substrate specificity of the ribozyme. In Lactobacillus delbrueckii subsp. bulgaricus (strain ATCC 11842 / DSM 20081 / BCRC 10696 / JCM 1002 / NBRC 13953 / NCIMB 11778 / NCTC 12712 / WDCM 00102 / Lb 14), this protein is Ribonuclease P protein component.